A 23-amino-acid polypeptide reads, in one-letter code: Septenin 2c (23 aa).

In terms of tissue distribution, expressed in skin granular glands.

Its subcellular location is the secreted. Its function is as follows. May act as an antimicrobial peptide. The sequence is that of Septenin 2c from Osteopilus septentrionalis (Cuban treefrog).